The chain runs to 131 residues: Glycine cleavage system H protein (131 aa).

The region spanning 24 to 106 is the Lipoyl-binding domain; the sequence is RVTVGISDHA…YGDGWMYVVE (83 aa). The residue at position 65 (lysine 65) is an N6-lipoyllysine.

The protein belongs to the GcvH family. As to quaternary structure, the glycine cleavage system is composed of four proteins: P, T, L and H. (R)-lipoate is required as a cofactor.

The glycine cleavage system catalyzes the degradation of glycine. The H protein shuttles the methylamine group of glycine from the P protein to the T protein. The chain is Glycine cleavage system H protein from Stenotrophomonas maltophilia (strain R551-3).